The primary structure comprises 1203 residues: Transmembrane channel-like protein 2 (1203 aa).

2 disordered regions span residues 1 to 39 (MPKS…IDSR) and 64 to 90 (PHTR…EASK). Acidic residues predominate over residues 73-86 (FDDDDDEFDEEDDK). Residues 191-213 (VLGVNITITFIMCMFVVIPEWLA) form a helical membrane-spanning segment. N-linked (GlcNAc...) asparagine glycosylation occurs at Asn-225. The next 6 helical transmembrane spans lie at 276-298 (YRVP…FIIL), 369-391 (FVAR…WAIM), 406-428 (ATAI…LGKI), 441-463 (LGRV…MLQL), 665-687 (MIWL…LIIL), and 714-736 (FFFA…VIAS). The N-linked (GlcNAc...) asparagine glycan is linked to Asn-748. A helical membrane pass occupies residues 780-802 (IIIPVLVLLSLVIYFLIAMVTGL). Disordered regions lie at residues 826–908 (ELAG…SLPP), 927–1039 (KYGR…IEKQ), 1059–1087 (ATVE…HEPL), and 1112–1203 (NDET…SDND). Residues 865–874 (NRSTAKSVSG) show a composition bias toward polar residues. Positions 898 to 908 (DSESTTSSLPP) are enriched in low complexity. Basic and acidic residues predominate over residues 927-945 (KYGRHDDIEMEEGGGRLRE). Composition is skewed to low complexity over residues 973-997 (QSFD…PSNS) and 1022-1035 (SASS…PSSS). Positions 1061-1076 (VENSSQDPTRPPSTDD) are enriched in polar residues. Basic and acidic residues-rich tracts occupy residues 1133-1147 (SPRE…KDQQ) and 1172-1203 (PPSE…SDND).

This sequence belongs to the TMC family.

The protein localises to the membrane. In terms of biological role, probable ion channel. This is Transmembrane channel-like protein 2 (tmc-2) from Caenorhabditis elegans.